The primary structure comprises 157 residues: Transcription elongation factor GreA (157 aa).

Belongs to the GreA/GreB family.

Necessary for efficient RNA polymerase transcription elongation past template-encoded arresting sites. The arresting sites in DNA have the property of trapping a certain fraction of elongating RNA polymerases that pass through, resulting in locked ternary complexes. Cleavage of the nascent transcript by cleavage factors such as GreA or GreB allows the resumption of elongation from the new 3'terminus. GreA releases sequences of 2 to 3 nucleotides. This Maricaulis maris (strain MCS10) (Caulobacter maris) protein is Transcription elongation factor GreA.